We begin with the raw amino-acid sequence, 1168 residues long: Probable serine/threonine protein kinase IRE (1168 aa).

Disordered regions lie at residues 1–165 (MSTT…GVES) and 377–444 (EKQN…KIQP). Low complexity predominate over residues 16–25 (PTTISTPTST). Composition is skewed to basic and acidic residues over residues 39 to 54 (RHSDKEGEDEQAKTDE) and 107 to 130 (QDDKDVAKEKPRVGVVDARADARA). 2 stretches are compositionally biased toward polar residues: residues 146-163 (QWSQSKSQRVPANSNPGV) and 401-414 (TARSTDSTSSNFRM). The C2H2-type; atypical zinc finger occupies 488-507 (CRICEVEIPVVHVEEHSRIC). 3 disordered regions span residues 546–566 (PRAVADSARLSNSSRQEDLDE), 602–622 (GTKDSSAGSLTPPSPATPRNS), and 717–744 (SSNAMPDEESSADEDTVRSLRASPLNPR). The 290-residue stretch at 754-1043 (FEIIKPISRG…AGEVKQHHFF (290 aa)) folds into the Protein kinase domain. Residues 760 to 768 (ISRGAFGRV) and Lys-783 contribute to the ATP site. Catalysis depends on Asp-877, which acts as the Proton acceptor. Positions 1044 to 1144 (KDINWDTLAR…KNLSQLASIN (101 aa)) constitute an AGC-kinase C-terminal domain.

Belongs to the protein kinase superfamily. AGC Ser/Thr protein kinase family. Highly expressed in roots, elongating root hair cells and pollen grains.

It catalyses the reaction L-seryl-[protein] + ATP = O-phospho-L-seryl-[protein] + ADP + H(+). It carries out the reaction L-threonyl-[protein] + ATP = O-phospho-L-threonyl-[protein] + ADP + H(+). In terms of biological role, modulates root tip growth. May play a common role in the tip growth of plant cells. This is Probable serine/threonine protein kinase IRE from Arabidopsis thaliana (Mouse-ear cress).